The following is a 363-amino-acid chain: Inositol-3-phosphate synthase (363 aa).

Lys-65 participates in a covalent cross-link: Isoglutamyl lysine isopeptide (Lys-Gln) (interchain with Q-Cter in protein Pup). Residues Asp-70, Ala-129, Tyr-149, Ser-192, Asp-227, and Lys-240 each contribute to the NAD(+) site.

It belongs to the myo-inositol 1-phosphate synthase family. It depends on NAD(+) as a cofactor. In terms of processing, pupylated at Lys-65 by the prokaryotic ubiquitin-like protein Pup, which leads to its degradation by the proteasome.

It carries out the reaction D-glucose 6-phosphate = 1D-myo-inositol 3-phosphate. Its function is as follows. Key enzyme in myo-inositol biosynthesis pathway that catalyzes the conversion of glucose 6-phosphate to 1D-myo-inositol 3-phosphate in a NAD-dependent manner. In Mycolicibacterium smegmatis (strain ATCC 700084 / mc(2)155) (Mycobacterium smegmatis), this protein is Inositol-3-phosphate synthase (ino1).